Here is an 810-residue protein sequence, read N- to C-terminus: E3 ubiquitin-protein ligase RNF10 (810 aa).

The segment covering 1–31 (MPQSSPSAAATASDMDKNSGSSSSSASSGSS) has biased composition (low complexity). Residues 1 to 119 (MPQSSPSAAA…SFNGGRRDEV (119 aa)) are disordered. A Phosphoserine modification is found at Ser5. Residues 76–92 (NFINQSRRSNSQKSKTF) are compositionally biased toward polar residues. The interval 101–185 (GGSSKLFSSS…FNKELFLQAN (85 aa)) is interaction with MEOX2. Residues 104-113 (SKLFSSSFNG) are compositionally biased toward low complexity. 2 positions are modified to phosphoserine: Ser110 and Ser128. An RING-type zinc finger spans residues 225 to 267 (CPICLYPPTAAKITRCGHIFCWACILHYLSLSEKTWSKCPICY). Disordered stretches follow at residues 598-623 (KRKR…EENK), 652-674 (DSAL…LSRS), 722-759 (ADVW…PVPS), and 775-810 (LDTP…VHTK). Residues 607–623 (AREERRRERRIEMEENK) show a composition bias toward basic and acidic residues. Residues 652–661 (DSALGSTSTE) are compositionally biased toward polar residues. Positions 662–674 (GRGALSLSPLSRS) are enriched in low complexity. The span at 722 to 735 (ADVWPKTAPKKDEN) shows a compositional bias: basic and acidic residues. Over residues 801–810 (LFSTSVVHTK) the composition is skewed to polar residues.

The protein belongs to the RNF10 family. In terms of assembly, interacts with MEOX2.

Its subcellular location is the cytoplasm. It localises to the nucleus. It catalyses the reaction S-ubiquitinyl-[E2 ubiquitin-conjugating enzyme]-L-cysteine + [acceptor protein]-L-lysine = [E2 ubiquitin-conjugating enzyme]-L-cysteine + N(6)-ubiquitinyl-[acceptor protein]-L-lysine.. Its pathway is protein modification; protein ubiquitination. E3 ubiquitin-protein ligase that catalyzes monoubiquitination of 40S ribosomal proteins RPS2/us5 and RPS3/us3 in response to ribosome stalling. Part of a ribosome quality control that takes place when ribosomes have stalled during translation initiation (iRQC): RNF10 acts by mediating monoubiquitination of RPS2/us5 and RPS3/us3, promoting their degradation by the proteasome. Also promotes ubiquitination of 40S ribosomal proteins in response to ribosome stalling during translation elongation. The action of RNF10 in iRQC is counteracted by USP10. May also act as a transcriptional factor involved in the regulation of MAG (Myelin-associated glycoprotein) expression. Acts as a regulator of Schwann cell differentiation and myelination. This Bos taurus (Bovine) protein is E3 ubiquitin-protein ligase RNF10 (RNF10).